Here is an 847-residue protein sequence, read N- to C-terminus: Rho GTPase-activating protein 12 (847 aa).

Residues 12-74 form the SH3 domain; the sequence is PGQAYIEVEY…PAQYVKEVTR (63 aa). The interval 110–241 is disordered; sequence LPELSSFGKP…PPNQGRPDSP (132 aa). 2 stretches are compositionally biased toward polar residues: residues 117-174 and 191-200; these read GKPS…QNRT and TSFSQEQSCD. Serine 165 carries the post-translational modification Phosphoserine. Phosphoserine is present on residues serine 201, serine 213, and serine 215. Over residues 224–234 the composition is skewed to polar residues; it reads TEQIRATTPPN. A phosphothreonine mark is found at threonine 230 and threonine 231. Position 240 is a phosphoserine (serine 240). Phosphotyrosine is present on tyrosine 243. WW domains are found at residues 265 to 298 and 358 to 391; these read IQINGEWETHKDSSGRCYYYDRGTQERTWKPPRW and DYTNEKWLKHIDDQGRQYYYSADGSRSEWELPKY. The interval 293–317 is disordered; the sequence is WKPPRWTRDASISKGDFQSPGDQEL. 2 disordered regions span residues 428-466 and 591-625; these read DTNDKESPTASKPCFPENESSPSSPKHQDTASSPKDQEK and PDSPGIEKHDKEKEQKDPKKLRSFKVSSIDSSEQK. The segment covering 445-461 has biased composition (polar residues); sequence NESSPSSPKHQDTASSP. Positions 463–575 constitute a PH domain; that stretch reads DQEKYGLLNV…WFKVLSSTIN (113 aa). Serine 593 is modified (phosphoserine). The segment covering 595-610 has biased composition (basic and acidic residues); the sequence is GIEKHDKEKEQKDPKK. One can recognise a Rho-GAP domain in the interval 657-845; that stretch reads SNLANLCQRE…LILLELSSIF (189 aa).

Its function is as follows. GTPase activator for the Rho-type GTPases by converting them to an inactive GDP-bound state. The protein is Rho GTPase-activating protein 12 (ARHGAP12) of Macaca fascicularis (Crab-eating macaque).